The chain runs to 523 residues: (R)-citramalate synthase (523 aa).

The Pyruvate carboxyltransferase domain maps to 6 to 272; it reads VEVLDTTLRD…KGNESLKKLK (267 aa).

Belongs to the alpha-IPM synthase/homocitrate synthase family.

It catalyses the reaction pyruvate + acetyl-CoA + H2O = (3R)-citramalate + CoA + H(+). The protein operates within amino-acid biosynthesis; L-isoleucine biosynthesis; 2-oxobutanoate from pyruvate: step 1/3. With respect to regulation, inhibited by isoleucine. In terms of biological role, catalyzes the condensation of pyruvate and acetyl-coenzyme A to form (R)-citramalate. Makes part of a pathway for isoleucine biosynthesis, i.e. the citramalate-dependent pathway. Also displays a low alpha-isopropylmalate synthase activity, using 2-oxoisovalerate as substrate, but is unable to use 2-oxoglutarate. This chain is (R)-citramalate synthase, found in Sulfolobus acidocaldarius (strain ATCC 33909 / DSM 639 / JCM 8929 / NBRC 15157 / NCIMB 11770).